Consider the following 342-residue polypeptide: D-erythrose-4-phosphate dehydrogenase (342 aa).

11 to 12 contacts NAD(+); the sequence is RI. Residues 153–155, Arg199, 212–213, and Arg235 each bind substrate; these read SCT and TK. Cys154 (nucleophile) is an active-site residue. Asn317 contacts NAD(+).

It belongs to the glyceraldehyde-3-phosphate dehydrogenase family. Epd subfamily. Homotetramer.

It localises to the cytoplasm. The catalysed reaction is D-erythrose 4-phosphate + NAD(+) + H2O = 4-phospho-D-erythronate + NADH + 2 H(+). It functions in the pathway cofactor biosynthesis; pyridoxine 5'-phosphate biosynthesis; pyridoxine 5'-phosphate from D-erythrose 4-phosphate: step 1/5. Functionally, catalyzes the NAD-dependent conversion of D-erythrose 4-phosphate to 4-phosphoerythronate. The protein is D-erythrose-4-phosphate dehydrogenase of Shewanella denitrificans (strain OS217 / ATCC BAA-1090 / DSM 15013).